We begin with the raw amino-acid sequence, 461 residues long: Cysteine--tRNA ligase (461 aa).

Cys-29 serves as a coordination point for Zn(2+). Positions Met-31 to His-41 match the 'HIGH' region motif. The Zn(2+) site is built by Cys-210, His-235, and Glu-239. Positions Lys-267–Ser-271 match the 'KMSKS' region motif. Residue Lys-270 participates in ATP binding.

The protein belongs to the class-I aminoacyl-tRNA synthetase family. Monomer. It depends on Zn(2+) as a cofactor.

It localises to the cytoplasm. The enzyme catalyses tRNA(Cys) + L-cysteine + ATP = L-cysteinyl-tRNA(Cys) + AMP + diphosphate. This Stutzerimonas stutzeri (strain A1501) (Pseudomonas stutzeri) protein is Cysteine--tRNA ligase.